The primary structure comprises 381 residues: MVASSNTGLEREDHQRDADFNKAMHGSSAQARGGVAAMFRKGGAAKQAAVDEYFKHWDNKPAENETPEERAARQAEYATLTRHYYNLATDLYEYGWGQSFHFCRFSQGEPFYQAIARHEHYLAHQIGIKDGMKVLDVGCGVGGPAREIAKFTGAHITGLNNNNYQIERATHYAFKEGLSNQLEFVKGDFMQMSFPDNSFDAVYAIEATVHAPTLKGIYSEIFRVLKPGGVFGVYEWLMTDEYDNDNLRHREIRLGIEQGDGISNMCKVSEGIAAIHDSGFEMLHHEDLADRPDALPWYWPLAGELRYVQTVGDFFTIVRMTTWGRTIAHGLAGLLETFKLAPAGTKKTADSLALAADCLVAGGRDKLFTPMYLMVARKPAA.

Belongs to the class I-like SAM-binding methyltransferase superfamily. Erg6/SMT family.

It carries out the reaction lanosterol + S-adenosyl-L-methionine = eburicol + S-adenosyl-L-homocysteine + H(+). Its pathway is steroid metabolism; ergosterol biosynthesis. Its function is as follows. Sterol 24-C-methyltransferase; part of the third module of ergosterol biosynthesis pathway that includes the late steps of the pathway. ERG6A and ERG6B methylate lanosterol at C-24 to produce eburicol. The third module or late pathway involves the ergosterol synthesis itself through consecutive reactions that mainly occur in the endoplasmic reticulum (ER) membrane. Firstly, the squalene synthase ERG9 catalyzes the condensation of 2 farnesyl pyrophosphate moieties to form squalene, which is the precursor of all steroids. Squalene synthase is crucial for balancing the incorporation of farnesyl diphosphate (FPP) into sterol and nonsterol isoprene synthesis. Secondly, squalene is converted into lanosterol by the consecutive action of the squalene epoxidase ERG1 and the lanosterol synthase ERG7. Then, the delta(24)-sterol C-methyltransferase ERG6 methylates lanosterol at C-24 to produce eburicol. Eburicol is the substrate of the sterol 14-alpha demethylase encoded by CYP51A, CYP51B and CYP51C, to yield 4,4,24-trimethyl ergosta-8,14,24(28)-trienol. CYP51B encodes the enzyme primarily responsible for sterol 14-alpha-demethylation, and plays an essential role in ascospore formation. CYP51A encodes an additional sterol 14-alpha-demethylase, induced on ergosterol depletion and responsible for the intrinsic variation in azole sensitivity. The third CYP51 isoform, CYP51C, does not encode a sterol 14-alpha-demethylase, but is required for full virulence on host wheat ears. The C-14 reductase ERG24 then reduces the C14=C15 double bond which leads to 4,4-dimethylfecosterol. A sequence of further demethylations at C-4, involving the C-4 demethylation complex containing the C-4 methylsterol oxidases ERG25, the sterol-4-alpha-carboxylate 3-dehydrogenase ERG26 and the 3-keto-steroid reductase ERG27, leads to the production of fecosterol via 4-methylfecosterol. ERG28 has a role as a scaffold to help anchor ERG25, ERG26 and ERG27 to the endoplasmic reticulum. The C-8 sterol isomerase ERG2 then catalyzes the reaction which results in unsaturation at C-7 in the B ring of sterols and thus converts fecosterol to episterol. The sterol-C5-desaturases ERG3A and ERG3BB then catalyze the introduction of a C-5 double bond in the B ring to produce 5-dehydroepisterol. The C-22 sterol desaturases ERG5A and ERG5B further convert 5-dehydroepisterol into ergosta-5,7,22,24(28)-tetraen-3beta-ol by forming the C-22(23) double bond in the sterol side chain. Finally, ergosta-5,7,22,24(28)-tetraen-3beta-ol is substrate of the C-24(28) sterol reductase ERG4 to produce ergosterol. This chain is Sterol 24-C-methyltransferase ERG6A (FG02783.1), found in Gibberella zeae (strain ATCC MYA-4620 / CBS 123657 / FGSC 9075 / NRRL 31084 / PH-1) (Wheat head blight fungus).